The following is a 222-amino-acid chain: Chymotrypsin-1 (222 aa).

The region spanning 1 to 221 (IVGGKDAPVG…FVSWINANLK (221 aa)) is the Peptidase S1 domain. A disulfide bridge links Cys26 with Cys42. Residues His41 and Asp87 each act as charge relay system in the active site. 2 cysteine pairs are disulfide-bonded: Cys151–Cys164 and Cys174–Cys198. The Charge relay system role is filled by Ser178.

Belongs to the peptidase S1 family.

It is found in the secreted. Its subcellular location is the extracellular space. It catalyses the reaction Preferential cleavage: Tyr-|-Xaa, Trp-|-Xaa, Phe-|-Xaa, Leu-|-Xaa.. The sequence is that of Chymotrypsin-1 from Solenopsis invicta (Red imported fire ant).